The following is a 361-amino-acid chain: sn-glycerol-3-phosphate import ATP-binding protein UgpC (361 aa).

Residues 4 to 235 (LSLKGIRKSY…PETVFVAGFI (232 aa)) enclose the ABC transporter domain. 37–44 (GPSGCGKS) is a binding site for ATP.

Belongs to the ABC transporter superfamily. sn-glycerol-3-phosphate importer (TC 3.A.1.1.3) family. The complex is composed of two ATP-binding proteins (UgpC), two transmembrane proteins (UgpA and UgpE) and a solute-binding protein (UgpB).

It localises to the cell inner membrane. The enzyme catalyses sn-glycerol 3-phosphate(out) + ATP + H2O = sn-glycerol 3-phosphate(in) + ADP + phosphate + H(+). In terms of biological role, part of the ABC transporter complex UgpBAEC involved in sn-glycerol-3-phosphate (G3P) import. Responsible for energy coupling to the transport system. The chain is sn-glycerol-3-phosphate import ATP-binding protein UgpC from Burkholderia ambifaria (strain ATCC BAA-244 / DSM 16087 / CCUG 44356 / LMG 19182 / AMMD) (Burkholderia cepacia (strain AMMD)).